Reading from the N-terminus, the 992-residue chain is Meckelin (992 aa).

The signal sequence occupies residues 1–35; it reads MVMRTRPLAAMAVRSCFSALTGTVYLLLVLCEVSW. Residues 36 to 516 are Extracellular-facing; the sequence is AQIFSFPFQR…SVKYEMNQGD (481 aa). A cysteine-rich region spans residues 37 to 280; the sequence is QIFSFPFQRP…FHYVFEGAAG (244 aa). 12 disulfides stabilise this stretch: cysteine 49-cysteine 62, cysteine 65-cysteine 78, cysteine 80-cysteine 97, cysteine 100-cysteine 114, cysteine 117-cysteine 127, cysteine 129-cysteine 150, cysteine 153-cysteine 170, cysteine 173-cysteine 184, cysteine 186-cysteine 197, cysteine 237-cysteine 246, cysteine 253-cysteine 268, and cysteine 354-cysteine 375. N-linked (GlcNAc...) asparagine glycosylation is present at asparagine 242. A helical membrane pass occupies residues 517–545; it reads AFVQTDIALGVLGGLAVLSSLLKTAGWKR. Residues 546 to 555 lie on the Cytoplasmic side of the membrane; it reads RIGSPMIDLQ. The chain crosses the membrane as a helical span at residues 556 to 587; sequence TVMKFLLYYAGDLANVFFIITVGTGLYWLIFF. Residues 588–600 lie on the Extracellular side of the membrane; that stretch reads KAQKSVSVLLPMP. A helical membrane pass occupies residues 601–628; it reads VQEERFVTYVGCAFAMKALQFLHKLISQ. Over 629-667 the chain is Cytoplasmic; sequence ITIDIFFIDWERPKGKVLKAVEGEGGVRSATVPVSIWRT. The helical intramembrane region spans 668–676; the sequence is YFVANEWNE. A discontinuously helical membrane pass occupies residues 668 to 698; sequence YFVANEWNEIQTVRKINPLFQVLTTLFFLEV. An intramembrane segment occupies 677 to 685; sequence IQTVRKINP. The segment at residues 686–698 is an intramembrane region (helical); it reads LFQVLTTLFFLEV. The Extracellular portion of the chain corresponds to 699 to 728; the sequence is VGFKNLALMDPSSSLSRSLSDYAAPYSRIL. The helical intramembrane region spans 729–754; that stretch reads RYAVATTIWLVIGIVQVVFFAAFYER. A discontinuously helical transmembrane segment spans residues 729 to 768; that stretch reads RYAVATTIWLVIGIVQVVFFAAFYERFIEDKIRQFVDLCS. The stretch at 755-759 is an intramembrane region; sequence FIEDK. Positions 760 to 768 form an intramembrane region, helical; it reads IRQFVDLCS. The Cytoplasmic portion of the chain corresponds to 769-923; sequence MSNVSVFLLS…SIFYNDESHS (155 aa). Positions 924-926 form an intramembrane region, helical; it reads FSS. A discontinuously helical transmembrane segment spans residues 924-949; sequence FSSVLYYGNEATLLIFDLLFFCVVDL. Residues 927-933 lie within the membrane without spanning it; that stretch reads VLYYGNE. An intramembrane region (helical) is located at residues 934–949; sequence ATLLIFDLLFFCVVDL. Over 950-954 the chain is Extracellular; it reads ACQNF. A helical transmembrane segment spans residues 955–982; that stretch reads VLASFLTYLQQEIFRFIRNTVGQKNLAT. Topologically, residues 983–992 are cytoplasmic; sequence KTLVDERFLI.

In terms of assembly, homodimer. Part of the tectonic-like complex (also named B9 complex). Interacts with DNAJB9, DNAJC10 and mutated SFTPC. Interacts with SYNE2 during the early establishment of cell polarity. Interacts (via C-terminus) with FLNA. Interacts with TMEM218. Interacts with WNT5A. Interacts with ROR2.

Its subcellular location is the cell membrane. It is found in the endoplasmic reticulum membrane. The protein localises to the cytoplasm. The protein resides in the cytoskeleton. It localises to the cilium basal body. Functionally, part of the tectonic-like complex which is required for tissue-specific ciliogenesis and may regulate ciliary membrane composition. Involved in centrosome migration to the apical cell surface during early ciliogenesis. Required for ciliary structure and function, including a role in regulating length and appropriate number through modulating centrosome duplication. Is a key regulator of stereociliary bundle orientation. Required for epithelial cell branching morphology. Essential for endoplasmic reticulum-associated degradation (ERAD) of surfactant protein C (sftpc). Involved in the negative regulation of canonical Wnt signaling, and activation of the non-canonical cascade stimulated by WNT5A. In non-canonical Wnt signaling, it may act as ROR2 coreceptor. The chain is Meckelin (Tmem67) from Rattus norvegicus (Rat).